Reading from the N-terminus, the 212-residue chain is Uracil phosphoribosyltransferase (212 aa).

5-phospho-alpha-D-ribose 1-diphosphate is bound by residues Arg-78, Arg-103, and 130-138 (DPMLATGGS). Residues Ile-193 and 198 to 200 (GDA) each bind uracil. Asp-199 contacts 5-phospho-alpha-D-ribose 1-diphosphate.

Belongs to the UPRTase family. Requires Mg(2+) as cofactor.

It carries out the reaction UMP + diphosphate = 5-phospho-alpha-D-ribose 1-diphosphate + uracil. It functions in the pathway pyrimidine metabolism; UMP biosynthesis via salvage pathway; UMP from uracil: step 1/1. Its activity is regulated as follows. Allosterically activated by GTP. Functionally, catalyzes the conversion of uracil and 5-phospho-alpha-D-ribose 1-diphosphate (PRPP) to UMP and diphosphate. This chain is Uracil phosphoribosyltransferase, found in Pseudomonas paraeruginosa (strain DSM 24068 / PA7) (Pseudomonas aeruginosa (strain PA7)).